An 84-amino-acid polypeptide reads, in one-letter code: Small ribosomal subunit protein bS16 (84 aa).

It belongs to the bacterial ribosomal protein bS16 family.

In Burkholderia mallei (strain NCTC 10247), this protein is Small ribosomal subunit protein bS16.